An 82-amino-acid chain; its full sequence is MTFPRALTVIDDNGMVISIIFWLLLIIILILFSIALLNIIKLCMVCCNLGRTVVVIPVRHAYDAYKNFMRINAYNHNEALLV.

Over 1-19 (MTFPRALTVIDDNGMVISI) the chain is Virion surface. The helical transmembrane segment at 20–40 (IFWLLLIIILILFSIALLNII) threads the bilayer. Residues 41–82 (KLCMVCCNLGRTVVVIPVRHAYDAYKNFMRINAYNHNEALLV) lie on the Intravirion side of the membrane.

This sequence belongs to the alphacoronaviruses E protein family. Homopentamer. Interacts with membrane protein M in the budding compartment of the host cell, which is located between endoplasmic reticulum and the Golgi complex. Interacts with Nucleoprotein.

It is found in the host Golgi apparatus membrane. Functionally, plays a central role in virus morphogenesis and assembly. Acts as a viroporin and self-assembles in host membranes forming pentameric protein-lipid pores that allow ion transport. Also plays a role in the induction of apoptosis. The chain is Envelope small membrane protein from Canine coronavirus (strain BGF10) (CCoV).